The sequence spans 126 residues: Holo-[acyl-carrier-protein] synthase (126 aa).

2 residues coordinate Mg(2+): D9 and E58.

This sequence belongs to the P-Pant transferase superfamily. AcpS family. Requires Mg(2+) as cofactor.

The protein resides in the cytoplasm. It carries out the reaction apo-[ACP] + CoA = holo-[ACP] + adenosine 3',5'-bisphosphate + H(+). Functionally, transfers the 4'-phosphopantetheine moiety from coenzyme A to a Ser of acyl-carrier-protein. The protein is Holo-[acyl-carrier-protein] synthase of Pectobacterium carotovorum subsp. carotovorum (strain PC1).